Reading from the N-terminus, the 105-residue chain is Dicamba O-demethylase, ferredoxin component (105 aa).

The region spanning 2–105 is the 2Fe-2S ferredoxin-type domain; the sequence is PQITVVNQSG…GIKVTIAQED (104 aa). Residues Cys40, Cys46, Cys49, and Cys86 each coordinate [2Fe-2S] cluster.

It belongs to the adrenodoxin/putidaredoxin family. In terms of assembly, monomer. The dicamba O-demethylase multicomponent enzyme system is composed of an oxygenase component (DdmC) and an electron transfer component formed by a ferredoxin reductase (DdmA1) and a ferredoxin (DdmB). In vitro, dicamba O-demethylase assays in which DdmA2 is substituted for DdmA1 demonstrate that the two enzymes possess nearly identical activities. Requires [2Fe-2S] cluster as cofactor.

Functionally, component of the dicamba O-demethylase multicomponent enzyme system involved in the degradation of the herbicide dicamba. In vitro, functions as an intermediate electron transfer protein. This chain is Dicamba O-demethylase, ferredoxin component, found in Stenotrophomonas maltophilia (Pseudomonas maltophilia).